Here is a 298-residue protein sequence, read N- to C-terminus: GTPase Era (298 aa).

An Era-type G domain is found at 8–176; it reads HCGSVAVIGR…VRDVLALLPE (169 aa). The G1 stretch occupies residues 16–23; the sequence is GRPNVGKS. 16-23 serves as a coordination point for GTP; that stretch reads GRPNVGKS. A G2 region spans residues 42–46; it reads QTTRH. Residues 63–66 are G3; that stretch reads DTPG. GTP contacts are provided by residues 63 to 67 and 125 to 128; these read DTPGL and NKID. Residues 125–128 are G4; that stretch reads NKID. The interval 155-157 is G5; the sequence is ISA. One can recognise a KH type-2 domain in the interval 199–283; that stretch reads VREQLMRQLG…FLETWVRVRE (85 aa).

It belongs to the TRAFAC class TrmE-Era-EngA-EngB-Septin-like GTPase superfamily. Era GTPase family. Monomer.

The protein localises to the cytoplasm. It localises to the cell inner membrane. Functionally, an essential GTPase that binds both GDP and GTP, with rapid nucleotide exchange. Plays a role in 16S rRNA processing and 30S ribosomal subunit biogenesis and possibly also in cell cycle regulation and energy metabolism. This is GTPase Era from Stenotrophomonas maltophilia (strain R551-3).